Reading from the N-terminus, the 213-residue chain is E3 ubiquitin-protein ligase NleG8 (213 aa).

The RING/U-box domain stretch occupies residues 136-189 (CPITLCVPETGVFVKNARCSKVCSLYDISALTEMLRRNASHPLSREAFTPGMIV). The PDZ-binding motif signature appears at 211-213 (TRL).

It belongs to the NleG E3 ligase family. As to quaternary structure, interacts with host GOPC (human protein).

The protein resides in the secreted. The protein localises to the host cytoplasm. It carries out the reaction S-ubiquitinyl-[E2 ubiquitin-conjugating enzyme]-L-cysteine + [acceptor protein]-L-lysine = [E2 ubiquitin-conjugating enzyme]-L-cysteine + N(6)-ubiquitinyl-[acceptor protein]-L-lysine.. Functionally, effector proteins function to alter host cell physiology and promote bacterial survival in host tissues. This protein is an E3 ubiquitin-protein ligase that probably interferes with the host's ubiquitination pathway and targets host proteins for proteasomal degradation. Mice infected with a strain of bacteria deleted for this gene had an increased survival rate. Can be ubiquitinylated, and ubiquitinate ubiquitin, giving rise to polyubiquitin chains (in vitro). The protein is E3 ubiquitin-protein ligase NleG8 of Citrobacter rodentium.